A 448-amino-acid polypeptide reads, in one-letter code: MTKEKKHYICSNCGNTSPKWSGQCFDCGVWGSIIEEKVISNKNIAKIGSKQDFEQLSSNVTDQVRISTPIGELDRVLGGGLVLGSAILIGGDPGIGKSTLLLQLVAGSFASKVKCLYITGEESLDQIKLRALRLDLVNDKTNILAANNLEDIIASLEANKGNIDLVVIDSIQTIATRELTSPPGTVSQIRTCAHELVNYAKQNNIIILLSCHVTKDGQLAGPKLLEHLVDTVLYFEGDHNNHFRILRSYKNRFGGVGEIGVFEMSSSGLIEVTNPSELFLMKREQNVIGTAIFAGIEGSRPLLMEVQALIVPSNMVTPRRSAVGWDVNRLSMILAVLSSRIGLNLANYEVYLSIAGGLKINEPASDLAVAASLISAATNKPLPEHSVFFGEISLSGEIRKTAKAEARIKEALKLGFNNIICSKSENLTHDFISSIAHLKDLKLLLGSS.

A C4-type zinc finger spans residues 10–27; the sequence is CSNCGNTSPKWSGQCFDC. 91 to 98 contacts ATP; that stretch reads GDPGIGKS. Positions 250 to 254 match the RadA KNRFG motif motif; the sequence is KNRFG. A lon-protease-like region spans residues 349-448; that stretch reads EVYLSIAGGL…KDLKLLLGSS (100 aa).

This sequence belongs to the RecA family. RadA subfamily.

Functionally, DNA-dependent ATPase involved in processing of recombination intermediates, plays a role in repairing DNA breaks. Stimulates the branch migration of RecA-mediated strand transfer reactions, allowing the 3' invading strand to extend heteroduplex DNA faster. Binds ssDNA in the presence of ADP but not other nucleotides, has ATPase activity that is stimulated by ssDNA and various branched DNA structures, but inhibited by SSB. Does not have RecA's homology-searching function. The polypeptide is DNA repair protein RadA (Rickettsia bellii (strain RML369-C)).